An 847-amino-acid polypeptide reads, in one-letter code: Mitogen-activated protein kinase kinase kinase 11 (847 aa).

Phosphoserine is present on S11. Positions 11 to 38 (SPLGSWNGSGSGGGGGGGGGRPEGSPKA) are disordered. The segment covering 17-32 (NGSGSGGGGGGGGGRP) has biased composition (gly residues). Residue S35 is modified to Phosphoserine. An SH3 domain is found at 41-105 (YANPVWTALF…PSNYVSRGGG (65 aa)). A Protein kinase domain is found at 117 to 379 (LRLEEVIGIG…ASILQQLEAL (263 aa)). Residues 123–131 (IGIGGFGKV) and K144 each bind ATP. The active-site Proton acceptor is the D241. T277 carries the post-translational modification Phosphothreonine; by autocatalysis. S281 bears the Phosphoserine; by autocatalysis and MAP4K1 mark. S394 carries the phosphoserine modification. 2 leucine-zipper regions span residues 403-424 (IQGL…EEEL) and 438-459 (LRRR…ELTL). S507, S524, S548, S555, and S556 each carry phosphoserine. Positions 537 to 643 (PAEPGQAWGR…SSGTPKLIQR (107 aa)) are disordered. Residues 550–562 (RRLEDSSNGERRA) are compositionally biased toward basic and acidic residues. Residues 597–609 (SSPLGSPSTPPAL) show a composition bias toward low complexity. S654, S693, and S705 each carry phosphoserine. The interval 655–847 (LGLGRDLQPP…QAPWVPEAGP (193 aa)) is disordered. A compositionally biased stretch (pro residues) spans 676–694 (TTPPTPTPAPCPTEPPPSP). The residue at position 708 (T708) is a Phosphothreonine. Residues S724, S727, S740, S748, S758, S770, S789, S793, and S815 each carry the phosphoserine modification. Residues 760–773 (PLGLISRPRPSPLR) show a composition bias toward low complexity. The span at 787-799 (RPSPLPSPQPAPR) shows a compositional bias: pro residues. Positions 800-816 (RAPWTLFPDSDPFWDSP) are enriched in low complexity.

The protein belongs to the protein kinase superfamily. STE Ser/Thr protein kinase family. MAP kinase kinase kinase subfamily. Homodimer; undergoes dimerization during activation. Interacts with MAP2K4/MKK4. Interacts with MAP2K7/MKK7. Found in a complex with SH3RF1, RAC1, MAP2K7/MKK7, MAPK8IP1/JIP1 and MAPK8/JNK1. The cofactor is Mg(2+). In terms of processing, autophosphorylation on serine and threonine residues within the activation loop plays a role in enzyme activation. Thr-277 is likely to be the main autophosphorylation site. Phosphorylation of Ser-555 and Ser-556 is induced by CDC42. As to expression, expressed in a wide variety of normal and neoplastic tissues including fetal lung, liver, heart and kidney, and adult lung, liver, heart, kidney, placenta, skeletal muscle, pancreas and brain.

Its subcellular location is the cytoplasm. It localises to the cytoskeleton. The protein localises to the microtubule organizing center. The protein resides in the centrosome. It carries out the reaction L-seryl-[protein] + ATP = O-phospho-L-seryl-[protein] + ADP + H(+). It catalyses the reaction L-threonyl-[protein] + ATP = O-phospho-L-threonyl-[protein] + ADP + H(+). Its activity is regulated as follows. Homodimerization via the leucine zipper domains is required for autophosphorylation and subsequent activation. Activates the JUN N-terminal pathway. Required for serum-stimulated cell proliferation and for mitogen and cytokine activation of MAPK14 (p38), MAPK3 (ERK) and MAPK8 (JNK1) through phosphorylation and activation of MAP2K4/MKK4 and MAP2K7/MKK7. Plays a role in mitogen-stimulated phosphorylation and activation of BRAF, but does not phosphorylate BRAF directly. Influences microtubule organization during the cell cycle. In Homo sapiens (Human), this protein is Mitogen-activated protein kinase kinase kinase 11.